Consider the following 88-residue polypeptide: Small ribosomal subunit protein uS15c (88 aa).

Belongs to the universal ribosomal protein uS15 family. As to quaternary structure, part of the 30S ribosomal subunit.

The protein resides in the plastid. Its subcellular location is the chloroplast. The chain is Small ribosomal subunit protein uS15c (rps15) from Aethionema cordifolium (Lebanon stonecress).